We begin with the raw amino-acid sequence, 408 residues long: BTB/POZ and MATH domain-containing protein 3 (408 aa).

Positions 24-158 (NGSHQFTIQG…DDCLVINCTV (135 aa)) constitute an MATH domain. In terms of domain architecture, BTB spans 194 to 261 (CDIAFQVGDE…IYTDVLPNVH (68 aa)).

Belongs to the Tdpoz family. As to quaternary structure, homodimer or heterodimer with BPM3 and BPM5. Interacts with CUL3A and CUL3B. Interacts with RAP2-4 and RAP2-13. Binds to MYB56 at the promoter of FLOWERING LOCUS T (FT). In terms of tissue distribution, ubiquitous.

Its subcellular location is the nucleus. The protein localises to the cytoplasm. It participates in protein modification; protein ubiquitination. May act as a substrate-specific adapter of an E3 ubiquitin-protein ligase complex (CUL3-RBX1-BTB) which mediates the ubiquitination and subsequent proteasomal degradation of target proteins. The protein is BTB/POZ and MATH domain-containing protein 3 of Arabidopsis thaliana (Mouse-ear cress).